Consider the following 313-residue polypeptide: ADP-L-glycero-D-manno-heptose-6-epimerase (313 aa).

NADP(+) is bound by residues 10 to 11, 31 to 32, K38, R53, 75 to 79, and N92; these read MI, DN, and EGACS. Y139 (proton acceptor) is an active-site residue. K143 lines the NADP(+) pocket. Residue N174 participates in substrate binding. Positions 175 and 183 each coordinate NADP(+). The Proton acceptor role is filled by K183. Substrate-binding positions include S185, H192, 206 to 209, R214, and Y277; that span reads FEGS.

It belongs to the NAD(P)-dependent epimerase/dehydratase family. HldD subfamily. In terms of assembly, homopentamer. It depends on NADP(+) as a cofactor.

The catalysed reaction is ADP-D-glycero-beta-D-manno-heptose = ADP-L-glycero-beta-D-manno-heptose. It participates in nucleotide-sugar biosynthesis; ADP-L-glycero-beta-D-manno-heptose biosynthesis; ADP-L-glycero-beta-D-manno-heptose from D-glycero-beta-D-manno-heptose 7-phosphate: step 4/4. The protein operates within bacterial outer membrane biogenesis; LPS core biosynthesis. Functionally, catalyzes the interconversion between ADP-D-glycero-beta-D-manno-heptose and ADP-L-glycero-beta-D-manno-heptose via an epimerization at carbon 6 of the heptose. In Vibrio parahaemolyticus serotype O3:K6 (strain RIMD 2210633), this protein is ADP-L-glycero-D-manno-heptose-6-epimerase.